We begin with the raw amino-acid sequence, 219 residues long: MSGFFQRLFGKDNKPAIARGPLGLHLNSGFTLDTLAFRLLEDELLIALPGEEFTVAAVSHIDLGGGSQIFRYYTSGDEFLQINTTGGEDIDDIDDIKLFVYEESYGISKESHWREAINAKAMGAMTLNWQEKRWQRFFNSEEPGNIEPVYMLEKVENQNHAKWEVHNFTMGYQRQVTEDTYEYLLLNGEESFNDLGEPEWLFSRALGVDIPLTSLHIIG.

This is an uncharacterized protein from Escherichia coli (strain K12).